Here is a 345-residue protein sequence, read N- to C-terminus: Uroporphyrinogen decarboxylase (345 aa).

Substrate is bound by residues 27–31, Asp-77, Tyr-152, Ser-207, and His-323; that span reads RQAGR.

Belongs to the uroporphyrinogen decarboxylase family. Homodimer.

It localises to the cytoplasm. The enzyme catalyses uroporphyrinogen III + 4 H(+) = coproporphyrinogen III + 4 CO2. Its pathway is porphyrin-containing compound metabolism; protoporphyrin-IX biosynthesis; coproporphyrinogen-III from 5-aminolevulinate: step 4/4. Functionally, catalyzes the decarboxylation of four acetate groups of uroporphyrinogen-III to yield coproporphyrinogen-III. In Maricaulis maris (strain MCS10) (Caulobacter maris), this protein is Uroporphyrinogen decarboxylase.